The following is a 541-amino-acid chain: Beta-glucuronidase (541 aa).

A signal peptide spans 1 to 20; that stretch reads MHHHPITLLSLLLGAAQSIA. N-linked (GlcNAc...) asparagine glycans are attached at residues Asn-69, Asn-115, and Asn-157. The Proton donor role is filled by Glu-208. N-linked (GlcNAc...) asparagine glycosylation is found at Asn-217, Asn-291, and Asn-304. Residue Glu-324 is the Nucleophile of the active site. N-linked (GlcNAc...) asparagine glycosylation is found at Asn-380, Asn-426, Asn-441, Asn-483, and Asn-512.

It belongs to the glycosyl hydrolase 79 family. In terms of processing, N-glycosylated.

The protein resides in the secreted. The enzyme catalyses a beta-D-glucuronoside + H2O = D-glucuronate + an alcohol. Beta-glucuronidase that hydrolyzes beta-glucuronosyl and 4-O-methyl-beta-glucuronosyl residues of arabinogalactan-protein. Hydrolyzed heparan sulfate only very weakly. Has no activity on xylan from birchwood. Able to catalyze the transglycosylation of glucuronic acid (GlcA) residues from p-nitrophenyl-beta-glucuronic acid (PNP beta-GlcA) to various monosaccharide acceptors such as glucose, galactose and xylose. This chain is Beta-glucuronidase, found in Aspergillus niger (strain ATCC MYA-4892 / CBS 513.88 / FGSC A1513).